Consider the following 414-residue polypeptide: Probable indole-3-pyruvate monooxygenase YUCCA1 (414 aa).

Gly25–Gly30 is an FAD binding site. Gly189–Gly194 provides a ligand contact to NADP(+).

Belongs to the FMO family. It depends on FAD as a cofactor. In terms of tissue distribution, expressed in the apical meristems and young floral primordia. Detected in the floral meristems and at the base of the floral organs.

It carries out the reaction indole-3-pyruvate + NADPH + O2 + H(+) = (indol-3-yl)acetate + CO2 + NADP(+) + H2O. It participates in plant hormone metabolism; auxin biosynthesis. In terms of biological role, involved in auxin biosynthesis, but not in the tryptamine or the CYP79B2/B3 branches. Catalyzes in vitro the N-oxidation of tryptamine to form N-hydroxyl tryptamine. Involved during embryogenesis and seedling development. Required for the formation of floral organs and vascular tissues. Belongs to the set of redundant YUCCA genes probably responsible for auxin biosynthesis in shoots. In Arabidopsis thaliana (Mouse-ear cress), this protein is Probable indole-3-pyruvate monooxygenase YUCCA1 (YUC1).